Here is a 388-residue protein sequence, read N- to C-terminus: Succinate--CoA ligase [ADP-forming] subunit beta (388 aa).

An ATP-grasp domain is found at 9 to 245 (KELLAGYGLP…KSQENERELK (237 aa)). ATP contacts are provided by residues Lys-46, 53 to 55 (GRG), Glu-100, Tyr-103, and Glu-108. Mg(2+)-binding residues include Asn-200 and Asp-214. Substrate is bound by residues Asn-265 and 322–324 (GIV).

Belongs to the succinate/malate CoA ligase beta subunit family. Heterotetramer of two alpha and two beta subunits. Requires Mg(2+) as cofactor.

It carries out the reaction succinate + ATP + CoA = succinyl-CoA + ADP + phosphate. The catalysed reaction is GTP + succinate + CoA = succinyl-CoA + GDP + phosphate. The protein operates within carbohydrate metabolism; tricarboxylic acid cycle; succinate from succinyl-CoA (ligase route): step 1/1. Functionally, succinyl-CoA synthetase functions in the citric acid cycle (TCA), coupling the hydrolysis of succinyl-CoA to the synthesis of either ATP or GTP and thus represents the only step of substrate-level phosphorylation in the TCA. The beta subunit provides nucleotide specificity of the enzyme and binds the substrate succinate, while the binding sites for coenzyme A and phosphate are found in the alpha subunit. The polypeptide is Succinate--CoA ligase [ADP-forming] subunit beta (Neisseria meningitidis serogroup C / serotype 2a (strain ATCC 700532 / DSM 15464 / FAM18)).